A 235-amino-acid polypeptide reads, in one-letter code: tRNA (guanine-N(1)-)-methyltransferase (235 aa).

Residues Gly114 and 134–139 contribute to the S-adenosyl-L-methionine site; that span reads IGDYIL.

Belongs to the RNA methyltransferase TrmD family. As to quaternary structure, homodimer.

It localises to the cytoplasm. It carries out the reaction guanosine(37) in tRNA + S-adenosyl-L-methionine = N(1)-methylguanosine(37) in tRNA + S-adenosyl-L-homocysteine + H(+). Functionally, specifically methylates guanosine-37 in various tRNAs. The chain is tRNA (guanine-N(1)-)-methyltransferase from Ehrlichia canis (strain Jake).